The sequence spans 101 residues: MAKTSAVEKNKRREKLVKRHAVKRARLKAIVMDQGLPLEERFRATIRLAELPRNSAKVRIRNRCEVSGRPRGYYRKLKMSRIALRQLGSLGQIPGVVKSSW.

This sequence belongs to the universal ribosomal protein uS14 family. As to quaternary structure, part of the 30S ribosomal subunit. Contacts proteins S3 and S10.

Its function is as follows. Binds 16S rRNA, required for the assembly of 30S particles and may also be responsible for determining the conformation of the 16S rRNA at the A site. The sequence is that of Small ribosomal subunit protein uS14 from Brucella abortus (strain S19).